Reading from the N-terminus, the 118-residue chain is Endoribonuclease MazF9 (118 aa).

It belongs to the PemK/MazF family. Forms a complex with cognate antitoxin MazE9.

Its function is as follows. Toxic component of a type II toxin-antitoxin (TA) system. Upon expression in E.coli and M.smegmatis inhibits cell growth and colony formation. Its toxic effect is neutralized by coexpression with cognate antitoxin MazE9. Acts as an mRNA interferase, specifically cleaving between U and C in UAC sequences. May cleave its cognate antitoxin's gene. In E.coli expression with non-cognate antitoxins VapB27 and VapB40 partially neutralizes the toxin. In Mycobacterium tuberculosis (strain ATCC 25618 / H37Rv), this protein is Endoribonuclease MazF9 (mazF9).